Reading from the N-terminus, the 368-residue chain is Outer membrane protein assembly factor BamC (368 aa).

Residues 1–18 (MTTKFFIGTAIAVSVLSA) form the signal peptide. Cys19 is lipidated: N-palmitoyl cysteine. Cys19 carries S-diacylglycerol cysteine lipidation.

Belongs to the BamC family. As to quaternary structure, part of the Bam complex.

It localises to the cell outer membrane. In terms of biological role, part of the outer membrane protein assembly complex, which is involved in assembly and insertion of beta-barrel proteins into the outer membrane. This chain is Outer membrane protein assembly factor BamC, found in Pseudoalteromonas atlantica (strain T6c / ATCC BAA-1087).